Consider the following 211-residue polypeptide: Mediator-associated protein 2 (211 aa).

Residues 128–211 (QQKLVGSVTN…KSKKKVKKEE (84 aa)) are disordered. The span at 134–148 (SVTNSSKKSSNLTQS) shows a compositional bias: low complexity. Serine 173 is modified (phosphoserine). Residues 189–198 (STSTVSGSSE) show a composition bias toward low complexity. Over residues 202–211 (KSKKKVKKEE) the composition is skewed to basic residues.

In terms of assembly, associated with the Mediator complex.

Its subcellular location is the nucleus. The sequence is that of Mediator-associated protein 2 from Arabidopsis thaliana (Mouse-ear cress).